The primary structure comprises 963 residues: Kinesin-1 heavy chain (963 aa).

Position 2 is an N-acetylalanine (Ala-2). In terms of domain architecture, Kinesin motor spans 8–325; sequence NIKVMCRFRP…LLFGQRAKTI (318 aa). 85 to 92 contributes to the ATP binding site; the sequence is GQTSSGKT. Lys-213 is covalently cross-linked (Glycyl lysine isopeptide (Lys-Gly) (interchain with G-Cter in SUMO2)). Positions 329–914 form a coiled coil; sequence VCVNVELTAE…AVRSKNMARR (586 aa). The segment at 908-963 is disordered; it reads SKNMARRGHSAQIAKPIRPGQHPAASPTHPSAIRGGGAFVQNSQPVAVRGGGGKQV. The segment at 915-963 is globular; the sequence is GHSAQIAKPIRPGQHPAASPTHPSAIRGGGAFVQNSQPVAVRGGGGKQV. Ser-933 is subject to Phosphoserine. Arg-956 bears the Omega-N-methylarginine mark.

It belongs to the TRAFAC class myosin-kinesin ATPase superfamily. Kinesin family. Kinesin subfamily. As to quaternary structure, oligomer composed of two heavy chains and two light chains. Interacts with GRIP1 and PPP1R42. Interacts with SYBU. Interacts with JAKMIP1. Interacts with PLEKHM2. Interacts with ECPAS. Interacts with ZFYVE27. Found in a complex with OGT, RHOT1, RHOT2 and TRAK1. Interacts with APP (via cytoplasmic domain).

The protein localises to the cytoplasm. It is found in the cytoskeleton. It localises to the cytolytic granule membrane. Its subcellular location is the lysosome membrane. Microtubule-dependent motor required for normal distribution of mitochondria and lysosomes. Can induce formation of neurite-like membrane protrusions in non-neuronal cells in a ZFYVE27-dependent manner. Regulates centrosome and nuclear positioning during mitotic entry. During the G2 phase of the cell cycle in a BICD2-dependent manner, antagonizes dynein function and drives the separation of nuclei and centrosomes. Required for anterograde axonal transportation of MAPK8IP3/JIP3 which is essential for MAPK8IP3/JIP3 function in axon elongation. Through binding with PLEKHM2 and ARL8B, directs lysosome movement toward microtubule plus ends. Involved in NK cell-mediated cytotoxicity. Drives the polarization of cytolytic granules and microtubule-organizing centers (MTOCs) toward the immune synapse between effector NK lymphocytes and target cells. This chain is Kinesin-1 heavy chain, found in Homo sapiens (Human).